The chain runs to 149 residues: Alpha-crystallin A chain (149 aa).

Residues 41 to 149 (LFRSVLESGI…DASHGERPIP (109 aa)) enclose the sHSP domain. Zn(2+) is bound by residues His89, Glu91, His96, and His143.

Belongs to the small heat shock protein (HSP20) family. Heteropolymer composed of three CRYAA and one CRYAB subunits. Inter-subunit bridging via zinc ions enhances stability, which is crucial as there is no protein turn over in the lens. Can also form homodimers and homotetramers (dimers of dimers) which serve as the building blocks of homooligomers. Within homooligomers, the zinc-binding motif is created from residues of 3 different molecules. His-89 and Glu-91 from one molecule are ligands of the zinc ion, and His-96 and His-143 residues from additional molecules complete the site with tetrahedral coordination geometry. Part of a complex required for lens intermediate filament formation composed of BFSP1, BFSP2 and CRYAA.

It is found in the cytoplasm. Its subcellular location is the nucleus. In terms of biological role, contributes to the transparency and refractive index of the lens. May act as a chaperone, preventing aggregation of various proteins under a wide range of stress conditions. The sequence is that of Alpha-crystallin A chain (CRYAA) from Columba livia (Rock dove).